The following is a 180-amino-acid chain: Peptidyl-tRNA hydrolase (180 aa).

Tyrosine 15 lines the tRNA pocket. Histidine 20 functions as the Proton acceptor in the catalytic mechanism. 3 residues coordinate tRNA: phenylalanine 67, asparagine 69, and asparagine 115.

The protein belongs to the PTH family. Monomer.

It is found in the cytoplasm. It carries out the reaction an N-acyl-L-alpha-aminoacyl-tRNA + H2O = an N-acyl-L-amino acid + a tRNA + H(+). Hydrolyzes ribosome-free peptidyl-tRNAs (with 1 or more amino acids incorporated), which drop off the ribosome during protein synthesis, or as a result of ribosome stalling. Functionally, catalyzes the release of premature peptidyl moieties from peptidyl-tRNA molecules trapped in stalled 50S ribosomal subunits, and thus maintains levels of free tRNAs and 50S ribosomes. In Chlamydia pneumoniae (Chlamydophila pneumoniae), this protein is Peptidyl-tRNA hydrolase.